The sequence spans 766 residues: Phospholipid phosphatase-related protein type 4 (766 aa).

Ser37 carries the phosphoserine modification. 4 helical membrane passes run 68–88 (LPCF…SLYF), 120–140 (AIPF…TIMV), 179–199 (FVGV…IIQL), and 248–268 (SFPS…SMYF). Asn269 carries N-linked (GlcNAc...) asparagine glycosylation. The next 2 helical transmembrane spans lie at 277–297 (KLLK…CGLT) and 309–329 (VYCG…YAVG). Ser347 carries the post-translational modification Phosphoserine. N-linked (GlcNAc...) asparagine glycosylation is present at Asn363. Ser386 is subject to Phosphoserine. Asn433 carries N-linked (GlcNAc...) asparagine glycosylation. Residue Ser439 is modified to Phosphoserine. Disordered stretches follow at residues 454 to 503 (SKNE…GNQY) and 510 to 529 (TVPG…IQSR). Asn456 carries an N-linked (GlcNAc...) asparagine glycan. A phosphoserine mark is found at Ser462 and Ser474. N-linked (GlcNAc...) asparagine glycosylation is found at Asn515 and Asn545. A Phosphoserine modification is found at Ser608. Disordered stretches follow at residues 634–654 (PIIQ…KWKA), 672–705 (DSES…GITT), and 741–766 (PERS…PYKD). Basic residues predominate over residues 688–702 (RKRKHIDSNEHHHHG). The segment covering 743–752 (RSNSPENTRN) has biased composition (polar residues).

The protein belongs to the PA-phosphatase related phosphoesterase family. O-glycosylated. Probably at Ser-347. In terms of tissue distribution, specifically expressed in neurons (at protein level).

Its subcellular location is the postsynaptic density membrane. In terms of biological role, postsynaptic density membrane protein that indirectly regulates glutamatergic synaptic transmission through lysophosphatidic acid (LPA)-mediated signaling pathways. Binds lysophosphatidic acid (LPA) and mediates its internalization into cells. Could act as receptor or a transporter of this lipid at the post-synaptic membrane. Modulates lysophosphatidic acid (LPA) activity in neuron axonal outgrowth during development by attenuating phospholipid-induced axon collapse. This chain is Phospholipid phosphatase-related protein type 4, found in Rattus norvegicus (Rat).